The following is a 449-amino-acid chain: UDP-N-acetylmuramate--L-alanine ligase (449 aa).

An ATP-binding site is contributed by 118–124 (GTHGKTT).

It belongs to the MurCDEF family.

It localises to the cytoplasm. It carries out the reaction UDP-N-acetyl-alpha-D-muramate + L-alanine + ATP = UDP-N-acetyl-alpha-D-muramoyl-L-alanine + ADP + phosphate + H(+). It participates in cell wall biogenesis; peptidoglycan biosynthesis. Functionally, cell wall formation. The protein is UDP-N-acetylmuramate--L-alanine ligase of Flavobacterium johnsoniae (strain ATCC 17061 / DSM 2064 / JCM 8514 / BCRC 14874 / CCUG 350202 / NBRC 14942 / NCIMB 11054 / UW101) (Cytophaga johnsonae).